The sequence spans 308 residues: Probable GTP 3',8-cyclase (308 aa).

The Radical SAM core domain occupies 4 to 224 (RFGRPLEDLR…QIRKKHFRPR (221 aa)). Arginine 13 is a GTP binding site. 3 residues coordinate [4Fe-4S] cluster: cysteine 20, cysteine 24, and cysteine 27. GTP is bound at residue lysine 60. Glycine 64 contributes to the S-adenosyl-L-methionine binding site. Position 90 (threonine 90) interacts with GTP. Residue serine 114 coordinates S-adenosyl-L-methionine. Lysine 151 lines the GTP pocket. [4Fe-4S] cluster-binding residues include cysteine 245 and cysteine 248. 250-252 (RIR) contacts GTP. [4Fe-4S] cluster is bound at residue cysteine 262.

This sequence belongs to the radical SAM superfamily. MoaA family. [4Fe-4S] cluster is required as a cofactor.

It carries out the reaction GTP + AH2 + S-adenosyl-L-methionine = (8S)-3',8-cyclo-7,8-dihydroguanosine 5'-triphosphate + 5'-deoxyadenosine + L-methionine + A + H(+). It functions in the pathway cofactor biosynthesis; molybdopterin biosynthesis. Functionally, catalyzes the cyclization of GTP to (8S)-3',8-cyclo-7,8-dihydroguanosine 5'-triphosphate. The polypeptide is Probable GTP 3',8-cyclase (Saccharolobus islandicus (strain L.S.2.15 / Lassen #1) (Sulfolobus islandicus)).